The chain runs to 200 residues: dTDP-4-dehydrorhamnose 3,5-epimerase (200 aa).

Residues R21, E26, 45-47, and R57 each bind substrate; that span reads QVN. H60 (proton acceptor) is an active-site residue. Substrate-binding residues include K70 and H116. The active-site Proton donor is Y129. The substrate site is built by E140 and K165.

It belongs to the dTDP-4-dehydrorhamnose 3,5-epimerase family.

It catalyses the reaction dTDP-4-dehydro-6-deoxy-alpha-D-glucose = dTDP-4-dehydro-beta-L-rhamnose. Its pathway is carbohydrate biosynthesis; dTDP-L-rhamnose biosynthesis. It functions in the pathway antibiotic biosynthesis; streptomycin biosynthesis. In terms of biological role, involved in the biosynthesis of the dihydrostreptose moiety of streptomycin. Catalyzes the epimerization of the C3' and C5'positions of dTDP-6-deoxy-D-xylo-4-hexulose, forming dTDP-6-deoxy-L-lyxo-4-hexulose. The chain is dTDP-4-dehydrorhamnose 3,5-epimerase from Streptomyces griseus.